The sequence spans 283 residues: Circadian clock oscillator protein KaiA (283 aa).

The tract at residues 3–133 is psR domain, binds oxidized quinones; the sequence is QSTALTICGL…VKLCPGCAVP (131 aa). Residues 3 to 163 form the KaiA N-terminal domain; that stretch reads QSTALTICGL…RLSQKLKERL (161 aa). Residues 164 to 172 form a flexible linker region; the sequence is GYLGVYYKR. Positions 173 to 281 constitute a KaiA C-terminal domain; that stretch reads DTAFFFRRMS…CEMYRRSIPR (109 aa).

In terms of assembly, homodimer. The KaiABC complex composition changes during the circadian cycle to control KaiC phosphorylation. Complexes KaiC(6), KaiA(2-4):KaiC(6), KaiB(6):KaiC(6) and KaiC(6):KaiB(6):KaiA(12) are among the most important forms, many form cooperatively. KaiA and CikA bind to the same region of the KaiB(fs) form and therefore compete.

In terms of biological role, key component of the KaiABC oscillator complex, which constitutes the main circadian regulator in cyanobacteria. Complex composition changes during the circadian cycle to control KaiC phosphorylation. KaiA stimulates KaiC autophosphorylation, while KaiB sequesters KaiA, leading to KaiC autodephosphorylation. KaiA binding to the KaiC CII domain during the subjective day yields KaiA(2-4):KaiC(6) complexes which stimulate KaiC autophosphorylation. Phospho-Ser-431 KaiC accumulation triggers binding of KaiB during the subjective night to form the KaiB(6):KaiC(6) complex, leading to changes in the output regulators CikA and SasA. KaiB(6):KaiC(6) formation exposes a site for KaiA binding on KaiB that sequesters KaiA from KaiC's CII domain, making the KaiC(6):KaiB(6):KaiA(12) complex resulting in KaiC autodephosphorylation. Complete dephosphorylation of KaiC leads to dissociation of KaiA(2):KaiB(1), completing 1 cycle of the Kai oscillator. Functionally, binds oxidized quinones via the N-terminal PsR domain, allowing it to sense redox changes and possibly mediate clock input. This is Circadian clock oscillator protein KaiA from Thermostichus vulcanus (Synechococcus vulcanus).